Consider the following 527-residue polypeptide: Arginine--tRNA ligase (527 aa).

The 'HIGH' region motif lies at 111–121 (ANPTGPLHIGH).

Belongs to the class-I aminoacyl-tRNA synthetase family. Monomer.

The protein resides in the cytoplasm. It carries out the reaction tRNA(Arg) + L-arginine + ATP = L-arginyl-tRNA(Arg) + AMP + diphosphate. The protein is Arginine--tRNA ligase of Campylobacter concisus (strain 13826).